A 331-amino-acid chain; its full sequence is MALPDFTMRQLLEAGVHFGHQSHRWNPKMAPFIFGTRNNIHIVDLAQTVPMLHHALQAVSDTVAKGGRILFVGTKRQAQDGVADAAKRCAQYFVNSRWLGGTLTNWKTISASIKRLRHLDDVLAGGEANSYTKKERLTLQRERDKLDRSLGGIKDMGGLPDLIFVIDTNKEDIAIQEAQRLNIPVAAIVDTNSDPKGITYVVPGNDDAGRAISLYCDLIARAAIDGISRAQGDSGIDIGASARPLAEELPAASSSGFQGLAGPRGTADDLKKLPGVSGAIEKKFNDLGIFHFWQLAELDHDTAHTIGEEVGLPSRADAWVAKAKALTAEAE.

It belongs to the universal ribosomal protein uS2 family.

The sequence is that of Small ribosomal subunit protein uS2 from Bradyrhizobium diazoefficiens (strain JCM 10833 / BCRC 13528 / IAM 13628 / NBRC 14792 / USDA 110).